The sequence spans 344 residues: Ferrochelatase (344 aa).

Positions 214 and 295 each coordinate Fe cation.

Belongs to the ferrochelatase family.

Its subcellular location is the cytoplasm. The catalysed reaction is heme b + 2 H(+) = protoporphyrin IX + Fe(2+). The protein operates within porphyrin-containing compound metabolism; protoheme biosynthesis; protoheme from protoporphyrin-IX: step 1/1. In terms of biological role, catalyzes the ferrous insertion into protoporphyrin IX. The chain is Ferrochelatase from Rhizobium leguminosarum bv. trifolii (strain WSM2304).